The following is a 1003-amino-acid chain: Pumilio homolog 4 (1003 aa).

The disordered stretch occupies residues 38–65; sequence QHRNQQSFGRERERDIDVHRSGSAPPTV. The span at 46–57 shows a compositional bias: basic and acidic residues; it reads GRERERDIDVHR. Serine 225 carries the phosphoserine modification. Positions 285-300 are enriched in polar residues; the sequence is KNSPNTMLGSTMSSPV. Residues 285 to 328 are disordered; sequence KNSPNTMLGSTMSSPVPRNRTPDSHLVGRSTASGLPPIGTRVGP. Threonine 305 is modified (phosphothreonine). A PUM-HD domain is found at 644–984; the sequence is AEASLLEGFK…HIVARVEKLI (341 aa). Pumilio repeat units follow at residues 664–699, 700–735, 736–771, 772–807, 808–843, 845–880, 881–916, and 917–958; these read EIVG…AIFP, EILP…ELAE, QVTG…RMVK, ELDG…FIIS, SFYG…RIIM, EIMD…EIIN, KLAG…VLVN, and EMLG…LILS.

The protein localises to the cytoplasm. Its function is as follows. Sequence-specific RNA-binding protein that regulates translation and mRNA stability by binding the 3'-UTR of target mRNAs. Binds the APUM-binding elements (APBEs) in the 3'-UTR mRNA sequence of CLV1, PNH, WUS and FAS2. This is Pumilio homolog 4 (APUM4) from Arabidopsis thaliana (Mouse-ear cress).